A 154-amino-acid chain; its full sequence is Superoxide dismutase [Cu-Zn] (154 aa).

Positions 47, 49, and 64 each coordinate Cu cation. The cysteines at positions 58 and 147 are disulfide-linked. The disordered stretch occupies residues glycine 62–lysine 89. Residues histidine 64, histidine 72, histidine 81, and aspartate 84 each contribute to the Zn(2+) site. Position 121 (histidine 121) interacts with Cu cation. Arginine 144 contributes to the substrate binding site.

The protein belongs to the Cu-Zn superoxide dismutase family. Homodimer. Requires Cu cation as cofactor. Zn(2+) serves as cofactor.

It localises to the cytoplasm. The catalysed reaction is 2 superoxide + 2 H(+) = H2O2 + O2. Its function is as follows. Destroys radicals which are normally produced within the cells and which are toxic to biological systems. This is Superoxide dismutase [Cu-Zn] (SOD1) from Yarrowia lipolytica (strain CLIB 122 / E 150) (Yeast).